The sequence spans 532 residues: Arginine--tRNA ligase (532 aa).

A 'HIGH' region motif is present at residues 122–132 (ANPTGPLHVAS).

The protein belongs to the class-I aminoacyl-tRNA synthetase family. In terms of assembly, monomer.

The protein localises to the cytoplasm. It carries out the reaction tRNA(Arg) + L-arginine + ATP = L-arginyl-tRNA(Arg) + AMP + diphosphate. The protein is Arginine--tRNA ligase of Elusimicrobium minutum (strain Pei191).